Here is a 519-residue protein sequence, read N- to C-terminus: Tetratricopeptide repeat protein 31 (519 aa).

Positions 147 to 197 form a coiled coil; that stretch reads QKLLVTEEEANRLAEELVAEEERMKQKAEKKRLKKKRQKERKRQERLEQYC. The span at 175–187 shows a compositional bias: basic residues; sequence EKKRLKKKRQKER. Disordered regions lie at residues 175 to 230 and 253 to 294; these read EKKR…EEDS and RREK…VQAS. Ser-278 carries the post-translational modification Phosphoserine. 3 TPR repeats span residues 305-338, 339-372, and 373-406; these read SQEL…NPQD, HRLF…RPGW, and PRGL…GSQP. The interval 474–506 is disordered; that stretch reads PSCHRSHPNQPLSQTQSRRPHPLKPQDPSKGWD. The segment covering 481-490 has biased composition (polar residues); that stretch reads PNQPLSQTQS.

The protein is Tetratricopeptide repeat protein 31 (TTC31) of Homo sapiens (Human).